The sequence spans 387 residues: O-phospho-L-seryl-tRNA:Cys-tRNA synthase 2 (387 aa).

Pyridoxal 5'-phosphate-binding positions include 89–90, N196, and 219–221; these read AR and SGH. N6-(pyridoxal phosphate)lysine is present on K222.

The protein belongs to the SepCysS family. In terms of assembly, homodimer. Interacts with SepRS. It depends on pyridoxal 5'-phosphate as a cofactor.

The enzyme catalyses O-phospho-L-seryl-tRNA(Cys) + hydrogen sulfide + H(+) = L-cysteinyl-tRNA(Cys) + phosphate. Converts O-phospho-L-seryl-tRNA(Cys) (Sep-tRNA(Cys)) to L-cysteinyl-tRNA(Cys) (Cys-tRNA(Cys)). The chain is O-phospho-L-seryl-tRNA:Cys-tRNA synthase 2 from Methanococcoides burtonii (strain DSM 6242 / NBRC 107633 / OCM 468 / ACE-M).